The primary structure comprises 606 residues: Mitogen-activated protein kinase kinase kinase 7 (606 aa).

The tract at residues 1-300 (MSTASAASSS…FPGADEPLQY (300 aa)) is interaction with MAPK8IP1. The 256-residue stretch at 36-291 (IEVEEVVGRG…KIMTHLMRYF (256 aa)) folds into the Protein kinase domain. ATP-binding positions include 42–50 (VGRGAFGVV) and lysine 63. Lysine 72 is covalently cross-linked (Glycyl lysine isopeptide (Lys-Gly) (interchain with G-Cter in ubiquitin)). The active-site Proton acceptor is the aspartate 156. Lysine 158 is covalently cross-linked (Glycyl lysine isopeptide (Lys-Gly) (interchain with G-Cter in ubiquitin)). A (Microbial infection) O-acetylthreonine; by Yersinia YopJ; alternate mark is found at threonine 184 and threonine 187. 2 positions are modified to phosphothreonine; by autocatalysis; alternate: threonine 184 and threonine 187. Position 192 is a phosphoserine; by autocatalysis (serine 192). Lysine 209 is covalently cross-linked (Glycyl lysine isopeptide (Lys-Gly) (interchain with G-Cter in ubiquitin)). The segment at 301-338 (PCQYSDEGQSNSATSTGSFMDIASTNTSNKSDTNMEQV) is disordered. The segment covering 306 to 338 (DEGQSNSATSTGSFMDIASTNTSNKSDTNMEQV) has biased composition (polar residues). Threonine 341 is modified ((Microbial infection) O-acetylthreonine; by Yersinia YopJ; alternate). The segment at 354–391 (KNQAKQQSESGRLSLGASRGSSVESLPPTSEGKRMSAD) is disordered. The span at 361-375 (SESGRLSLGASRGSS) shows a compositional bias: low complexity. Phosphoserine occurs at positions 367, 389, and 439. Polar residues predominate over residues 443 to 452 (LTVTGTEPGQ). The disordered stretch occupies residues 443–493 (LTVTGTEPGQVSSRSSSPSVRMITTSGPTSEKPTRSHPWTPDDSTDTNGSD). A (Microbial infection) O-acetylthreonine; by Yersinia YopJ; alternate mark is found at threonine 444, threonine 446, and threonine 448. A compositionally biased stretch (low complexity) spans 453 to 463 (VSSRSSSPSVR). Residue serine 455 is modified to Phosphoserine. Residues 464-473 (MITTSGPTSE) show a composition bias toward polar residues. At threonine 467 the chain carries (Microbial infection) O-acetylthreonine; by Yersinia YopJ; alternate.

This sequence belongs to the protein kinase superfamily. STE Ser/Thr protein kinase family. MAP kinase kinase kinase subfamily. In terms of assembly, can form homodimer. Binds both upstream activators and downstream substrates in multimolecular complexes. Interacts with TAB1/MAP3K7IP1, TAB2/MAP3K7IP2 and TAB3/MAP3K7IP3. Identified in the TRIKA2 complex composed of MAP3K7/TAK1, TAB1/MAP3K7IP1 and TAB2/MAP3K7IP2. Interacts with PPM1L and PPM1B/PP2CB. Interaction with PP2A and PPP6C leads to its repressed activity. Interacts with TRAF6 and TAB1/MAP3K7IP1; during IL-1 signaling. Interacts with TAOK1 and TAOK2; interaction with TAOK2 interferes with MAP3K7 interaction with IKKA, thus preventing NF-kappa-B activation. Interacts with DYNC2I2 (via WD domains). Interacts with CYLD and RBCK1. Interacts with TGFBR1; induces MAP3K7/TAK1 activation by TRAF6. Interacts with MAPK8IP1 and SMAD6. Interacts with isoform 1 of VRK2. Interacts with DAB2; the interaction is induced by TGF-beta stimulation and may mediate TGF-beta stimulated JNK activation. Interacts with TRIM5. Part of a complex containing ITCH, NDFIP1 and MAP3K7. Interacts with IFIT5; the interaction synergizes the recruitment of IKK to MAP3K7 and enhances IKK phosphorylation. Interacts with PLEKHM1 (via N- and C-terminus). Interacts with TRIM8. Found in a complex with SH3RF1, RAC2, MAP2K7/MKK7, MAPK8IP1/JIP1, MAPK8/JNK1 and MAPK9/JNK2. Interacts with SASH1. Interacts with RIPK1. (Microbial infection) Interacts with herpes simplex virus 2 protein US2; this interaction induces MAP3K7 phosphorylation and subsequent activation. Requires Mg(2+) as cofactor. Post-translationally, association with TAB1/MAP3K7IP1 promotes autophosphorylation at Ser-192 and subsequent activation. Association with TAB2/MAP3K7IP2, itself associated with free unanchored Lys-63 polyubiquitin chain, promotes autophosphorylation and subsequent activation of MAP3K7. Dephosphorylation at Ser-192 by PPM1B/PP2CB and at Thr-187 by PP2A and PPP6C leads to inactivation. 'Lys-48'-linked polyubiquitination at Lys-72 is induced by TNFalpha, and leads to proteasomal degradation. Undergoes 'Lys-48'-linked polyubiquitination catalyzed by ITCH. Requires 'Lys-63'-linked polyubiquitination for autophosphorylation and subsequent activation. 'Lys-63'-linked ubiquitination does not lead to proteasomal degradation. Deubiquitinated by CYLD, a protease that selectively cleaves 'Lys-63'-linked ubiquitin chains. Deubiquitinated by Y.enterocolitica YopP. Deubiquitinated by USP19; leading to negative regulation of TNF-alpha- and IL-1beta-triggered NF-kappa-B activation. In terms of processing, (Microbial infection) Cleaved and inactivated by the proteases 3C of coxsackievirus A16 and human enterovirus D68, allowing the virus to disrupt TRAF6-triggered NF-kappa-B induction. Post-translationally, (Microbial infection) Acetylation of Thr-184 and Thr-187 by Yersinia YopJ prevents phosphorylation and activation, thus blocking the MAPK signaling pathway. As to expression, isoform 1A is the most abundant in ovary, skeletal muscle, spleen and blood mononuclear cells. Isoform 1B is highly expressed in brain, kidney and small intestine. Isoform 1C is the major form in prostate. Isoform 1D is the less abundant form.

Its subcellular location is the cytoplasm. It localises to the cell membrane. It catalyses the reaction L-seryl-[protein] + ATP = O-phospho-L-seryl-[protein] + ADP + H(+). The catalysed reaction is L-threonyl-[protein] + ATP = O-phospho-L-threonyl-[protein] + ADP + H(+). With respect to regulation, activated by pro-inflammatory cytokines and in response to physical and chemical stresses, including osmotic stress, oxidative stress, arsenic and ultraviolet light irradiation. Activated by 'Lys-63'-linked polyubiquitination and by autophosphorylation. Association with TAB1/MAP3K7IP1 and TAB2/MAP3K7IP2 promotes activation through autophosphorylation, whereas PPM1B/PP2CB, PP2A and PPP6C dephosphorylation leads to inactivation. Ceramides are also able to activate MAP3K7/TAK1. In terms of biological role, serine/threonine kinase which acts as an essential component of the MAP kinase signal transduction pathway. Plays an important role in the cascades of cellular responses evoked by changes in the environment. Mediates signal transduction of TRAF6, various cytokines including interleukin-1 (IL-1), transforming growth factor-beta (TGFB), TGFB-related factors like BMP2 and BMP4, toll-like receptors (TLR), tumor necrosis factor receptor CD40 and B-cell receptor (BCR). Once activated, acts as an upstream activator of the MKK/JNK signal transduction cascade and the p38 MAPK signal transduction cascade through the phosphorylation and activation of several MAP kinase kinases like MAP2K1/MEK1, MAP2K3/MKK3, MAP2K6/MKK6 and MAP2K7/MKK7. These MAP2Ks in turn activate p38 MAPKs and c-jun N-terminal kinases (JNKs); both p38 MAPK and JNK pathways control the transcription factors activator protein-1 (AP-1). Independently of MAP2Ks and p38 MAPKs, acts as a key activator of NF-kappa-B by promoting activation of the I-kappa-B-kinase (IKK) core complex. Mechanistically, recruited to polyubiquitin chains of RIPK2 and IKBKG/NEMO via TAB2/MAP3K7IP2 and TAB3/MAP3K7IP3, and catalyzes phosphorylation and activation of IKBKB/IKKB component of the IKK complex, leading to NF-kappa-B activation. In osmotic stress signaling, plays a major role in the activation of MAPK8/JNK1, but not that of NF-kappa-B. Promotes TRIM5 capsid-specific restriction activity. Phosphorylates RIPK1 at 'Ser-321' which positively regulates RIPK1 interaction with RIPK3 to promote necroptosis but negatively regulates RIPK1 kinase activity and its interaction with FADD to mediate apoptosis. Phosphorylates STING1 in response to cGAMP-activation, promoting association between STEEP1 and STING1 and STING1 translocation to COPII vesicles. The sequence is that of Mitogen-activated protein kinase kinase kinase 7 from Homo sapiens (Human).